Consider the following 211-residue polypeptide: Imidazole glycerol phosphate synthase subunit HisH (211 aa).

Residues S5–L211 form the Glutamine amidotransferase type-1 domain. C83 serves as the catalytic Nucleophile. Active-site residues include H192 and E194.

As to quaternary structure, heterodimer of HisH and HisF.

The protein localises to the cytoplasm. The enzyme catalyses 5-[(5-phospho-1-deoxy-D-ribulos-1-ylimino)methylamino]-1-(5-phospho-beta-D-ribosyl)imidazole-4-carboxamide + L-glutamine = D-erythro-1-(imidazol-4-yl)glycerol 3-phosphate + 5-amino-1-(5-phospho-beta-D-ribosyl)imidazole-4-carboxamide + L-glutamate + H(+). It catalyses the reaction L-glutamine + H2O = L-glutamate + NH4(+). The protein operates within amino-acid biosynthesis; L-histidine biosynthesis; L-histidine from 5-phospho-alpha-D-ribose 1-diphosphate: step 5/9. IGPS catalyzes the conversion of PRFAR and glutamine to IGP, AICAR and glutamate. The HisH subunit catalyzes the hydrolysis of glutamine to glutamate and ammonia as part of the synthesis of IGP and AICAR. The resulting ammonia molecule is channeled to the active site of HisF. The polypeptide is Imidazole glycerol phosphate synthase subunit HisH (Nocardia farcinica (strain IFM 10152)).